We begin with the raw amino-acid sequence, 447 residues long: Chaperone protein dnaJ A7B, chloroplastic (447 aa).

A chloroplast-targeting transit peptide spans 1–86 (MALLQFGGTL…HRRSSRFIVR (86 aa)). Residues 90–154 (DFYSTLGVSR…EKRSIYDKYG (65 aa)) enclose the J domain. The CR-type zinc finger occupies 217-298 (GVEKEIEITR…CGGDGRVRKT (82 aa)). C230, C233, C247, C250, C273, C276, C286, and C289 together coordinate Zn(2+). CXXCXGXG motif repeat units lie at residues 230 to 237 (CNTCDGTG), 247 to 254 (CKTCGGQG), 273 to 280 (CNTCGGTG), and 286 to 293 (CNTCGGDG).

This sequence belongs to the DnaJ family. Interacts with PCNA. As to expression, expressed in roots, stems, leaves and panicles.

The protein localises to the plastid. The protein resides in the chloroplast. Plays pivotal roles in chloroplast development. Is essential for the regulation of chloroplast development and differentiation. The polypeptide is Chaperone protein dnaJ A7B, chloroplastic (Oryza sativa subsp. japonica (Rice)).